We begin with the raw amino-acid sequence, 1252 residues long: Putative late blight resistance protein homolog R1B-11 (1252 aa).

A coiled-coil region spans residues 543 to 566 (RYSDSLAFLKNQLQVIQTEFESLQ). NB-ARC domains are found at residues 684-736 (SVRR…RSRI) and 786-830 (SYHV…SSEG). 7 LRR repeats span residues 955-980 (FKFL…PYLR), 998-1026 (LWNL…VWDM), 1077-1100 (LKHL…KVSS), 1103-1125 (FPKL…ADDA), 1126-1149 (FPNL…CFTD), 1187-1212 (LVII…RLSS), and 1213-1236 (LPGI…DVDA). In terms of domain architecture, HMA spans 1188-1252 (VIIKKLVLKF…VGKLNKRDML (65 aa)).

Belongs to the disease resistance NB-LRR family.

Its subcellular location is the cytoplasm. The protein localises to the membrane. Confers resistance to late blight (Phytophthora infestans) races carrying the avirulence gene Avr1. Resistance proteins guard the plant against pathogens that contain an appropriate avirulence protein via an indirect interaction with this avirulence protein. That triggers a defense system including the hypersensitive response, which restricts the pathogen growth. The protein is Putative late blight resistance protein homolog R1B-11 (R1B-11) of Solanum demissum (Wild potato).